We begin with the raw amino-acid sequence, 394 residues long: Phosphopentomutase (394 aa).

Mn(2+)-binding residues include Asp10, Asp282, His287, Asp323, His324, and His335.

It belongs to the phosphopentomutase family. Mn(2+) is required as a cofactor.

It localises to the cytoplasm. It catalyses the reaction 2-deoxy-alpha-D-ribose 1-phosphate = 2-deoxy-D-ribose 5-phosphate. It carries out the reaction alpha-D-ribose 1-phosphate = D-ribose 5-phosphate. It functions in the pathway carbohydrate degradation; 2-deoxy-D-ribose 1-phosphate degradation; D-glyceraldehyde 3-phosphate and acetaldehyde from 2-deoxy-alpha-D-ribose 1-phosphate: step 1/2. In terms of biological role, isomerase that catalyzes the conversion of deoxy-ribose 1-phosphate (dRib-1-P) and ribose 1-phosphate (Rib-1-P) to deoxy-ribose 5-phosphate (dRib-5-P) and ribose 5-phosphate (Rib-5-P), respectively. This Dictyoglomus turgidum (strain DSM 6724 / Z-1310) protein is Phosphopentomutase.